The following is a 171-amino-acid chain: Ribosome maturation factor RimP (171 aa).

This sequence belongs to the RimP family.

It is found in the cytoplasm. Its function is as follows. Required for maturation of 30S ribosomal subunits. The chain is Ribosome maturation factor RimP from Anaeromyxobacter dehalogenans (strain 2CP-1 / ATCC BAA-258).